We begin with the raw amino-acid sequence, 518 residues long: ATP synthase subunit beta 2 (518 aa).

154 to 161 (GGAGVGKT) is a binding site for ATP. Positions 455 to 518 (IDEAKGKAKP…TDHAADTHES (64 aa)) are disordered. Composition is skewed to basic and acidic residues over residues 473-485 (PDSK…DPKP) and 507-518 (PETDHAADTHES).

This sequence belongs to the ATPase alpha/beta chains family. In terms of assembly, F-type ATPases have 2 components, CF(1) - the catalytic core - and CF(0) - the membrane proton channel. CF(1) has five subunits: alpha(3), beta(3), gamma(1), delta(1), epsilon(1). CF(0) has three main subunits: a(1), b(2) and c(9-12). The alpha and beta chains form an alternating ring which encloses part of the gamma chain. CF(1) is attached to CF(0) by a central stalk formed by the gamma and epsilon chains, while a peripheral stalk is formed by the delta and b chains.

The protein resides in the cell inner membrane. The catalysed reaction is ATP + H2O + 4 H(+)(in) = ADP + phosphate + 5 H(+)(out). Produces ATP from ADP in the presence of a proton gradient across the membrane. The catalytic sites are hosted primarily by the beta subunits. This is ATP synthase subunit beta 2 from Albidiferax ferrireducens (strain ATCC BAA-621 / DSM 15236 / T118) (Rhodoferax ferrireducens).